Consider the following 189-residue polypeptide: Threonylcarbamoyl-AMP synthase (189 aa).

The region spanning 6-189 (SPAFESVLTA…ALTGELYRQG (184 aa)) is the YrdC-like domain.

The protein belongs to the SUA5 family. TsaC subfamily.

The protein localises to the cytoplasm. The catalysed reaction is L-threonine + hydrogencarbonate + ATP = L-threonylcarbamoyladenylate + diphosphate + H2O. Functionally, required for the formation of a threonylcarbamoyl group on adenosine at position 37 (t(6)A37) in tRNAs that read codons beginning with adenine. Catalyzes the conversion of L-threonine, HCO(3)(-)/CO(2) and ATP to give threonylcarbamoyl-AMP (TC-AMP) as the acyladenylate intermediate, with the release of diphosphate. The polypeptide is Threonylcarbamoyl-AMP synthase (Photorhabdus laumondii subsp. laumondii (strain DSM 15139 / CIP 105565 / TT01) (Photorhabdus luminescens subsp. laumondii)).